The chain runs to 421 residues: C2H2 type master regulator of conidiophore development brlA (421 aa).

Residues threonine 228–threonine 242 show a composition bias toward polar residues. The segment at threonine 228 to aspartate 247 is disordered. C2H2-type zinc fingers lie at residues phenylalanine 309–histidine 333 and histidine 339–histidine 364. The segment covering threonine 361–arginine 370 has biased composition (basic residues). The tract at residues threonine 361–aspartate 421 is disordered.

The protein localises to the nucleus. Its function is as follows. BrlA, abaA and wetA are pivotal regulators of conidiophore development and conidium maturation. They act individually and together to regulate their own expression and that of numerous other sporulation-specific genes. Binds promoters of target genes at brlA response elements (BREs) containing the conserved sequence 5'-(C/A)(A/G)AGGG(G/A)-3'. The chain is C2H2 type master regulator of conidiophore development brlA from Aspergillus parasiticus (strain ATCC 56775 / NRRL 5862 / SRRC 143 / SU-1).